A 127-amino-acid chain; its full sequence is Large ribosomal subunit protein bL19 (127 aa).

The protein belongs to the bacterial ribosomal protein bL19 family.

This protein is located at the 30S-50S ribosomal subunit interface and may play a role in the structure and function of the aminoacyl-tRNA binding site. The polypeptide is Large ribosomal subunit protein bL19 (Paraburkholderia phymatum (strain DSM 17167 / CIP 108236 / LMG 21445 / STM815) (Burkholderia phymatum)).